We begin with the raw amino-acid sequence, 309 residues long: Ribosomal RNA small subunit methyltransferase H (309 aa).

S-adenosyl-L-methionine is bound by residues 30 to 32 (GGH), aspartate 50, phenylalanine 74, aspartate 96, and glutamine 103.

It belongs to the methyltransferase superfamily. RsmH family.

It is found in the cytoplasm. The catalysed reaction is cytidine(1402) in 16S rRNA + S-adenosyl-L-methionine = N(4)-methylcytidine(1402) in 16S rRNA + S-adenosyl-L-homocysteine + H(+). Its function is as follows. Specifically methylates the N4 position of cytidine in position 1402 (C1402) of 16S rRNA. In Wigglesworthia glossinidia brevipalpis, this protein is Ribosomal RNA small subunit methyltransferase H.